The chain runs to 772 residues: Hyperosmolality-gated Ca2+ permeable channel 1.1 (772 aa).

Residues Met-1–Lys-5 lie on the Extracellular side of the membrane. The helical transmembrane segment at Asp-6 to Leu-28 threads the bilayer. Over Arg-29–Arg-100 the chain is Cytoplasmic. A helical transmembrane segment spans residues Ile-101–Pro-122. The Extracellular segment spans residues Val-123–Phe-159. A glycan (N-linked (GlcNAc) asparagine) is linked at Asn-138. Residues Trp-160 to Glu-180 form a helical membrane-spanning segment. The Cytoplasmic segment spans residues Tyr-181 to Leu-372. A cytoplasmic region required for homodimerization region spans residues Gln-339–Arg-344. A helical membrane pass occupies residues Thr-373 to Gln-398. Over Ser-399–Ser-424 the chain is Extracellular. The chain crosses the membrane as a helical span at residues Leu-425–Ser-450. Over Lys-451–Leu-461 the chain is Cytoplasmic. Residues Glu-462 to Gly-485 traverse the membrane as a helical segment. Topologically, residues Ala-486–Ala-509 are extracellular. The chain crosses the membrane as a helical span at residues Ile-510–Pro-538. At Leu-539 to Gly-566 the chain is on the cytoplasmic side. Residues Phe-567–Val-587 form a helical membrane-spanning segment. Thr-588 is a topological domain (extracellular). The chain crosses the membrane as a helical span at residues Pro-589–Tyr-606. The Cytoplasmic portion of the chain corresponds to Arg-607 to Phe-624. Residues Trp-625–Leu-647 form a helical membrane-spanning segment. Residues Gly-648–Ala-653 lie on the Extracellular side of the membrane. Residues Ser-654–Lys-674 form a helical membrane-spanning segment. Residues Gly-675–Val-772 lie on the Cytoplasmic side of the membrane. The interval Leu-686 to Glu-688 is cytoplasmic region required for homodimerization. Residues Lys-743–Val-772 are disordered. A compositionally biased stretch (polar residues) spans Arg-748–Ser-763.

The protein belongs to the CSC1 (TC 1.A.17) family. Homodimer. In terms of tissue distribution, expressed in leaves, flowers, roots and guard cells.

Its subcellular location is the cell membrane. Its activity is regulated as follows. Activated by mechanical pressure. Functionally, acts as a hyperosmolarity-gated non-selective cation channel that permeates Ca(2+) ions. Shows the following permeability sequence: K(+) &gt; Ba(2+) = Ca(2+) &gt; Na(+) = Mg(2+) = Cs(+). Mechanosensitive ion channel that converts mechanical stimuli into a flow of ions: activated in response to membrane stretch and poke. In Arabidopsis thaliana (Mouse-ear cress), this protein is Hyperosmolality-gated Ca2+ permeable channel 1.1.